The following is a 54-amino-acid chain: Large ribosomal subunit protein bL32 (54 aa).

A disordered region spans residues 1 to 26 (MAVQKNKPTRSKRGMRRSHDSLTAPH). Positions 7–16 (KPTRSKRGMR) are enriched in basic residues.

The protein belongs to the bacterial ribosomal protein bL32 family.

This chain is Large ribosomal subunit protein bL32, found in Buchnera aphidicola subsp. Acyrthosiphon pisum (strain 5A).